A 127-amino-acid chain; its full sequence is Small ribosomal subunit protein eS8 (127 aa).

The segment at 1 to 24 (MKWQGKSARKPTGGRLVPARGKRK) is disordered.

Belongs to the eukaryotic ribosomal protein eS8 family. In terms of assembly, part of the 30S ribosomal subunit.

The sequence is that of Small ribosomal subunit protein eS8 from Methanothrix thermoacetophila (strain DSM 6194 / JCM 14653 / NBRC 101360 / PT) (Methanosaeta thermophila).